The following is an 881-amino-acid chain: Low-affinity phosphate transporter PHO90 (881 aa).

In terms of domain architecture, SPX spans 1–288; the sequence is MRFSHFLKYN…HLNTRTELIE (288 aa). 12 helical membrane-spanning segments follow: residues 417–437, 456–476, 493–513, 514–534, 539–559, 581–601, 663–683, 691–711, 718–738, 758–778, 805–825, and 854–874; these read IYFIILVTGLLLGIKTFNDAA, AIPLHITAFLVPLLVVLFKVL, ILAAMWSSTIMILLAGFTLGE, VLAQYNIAKVLASWLLAFAGC, VLLMAMCVVFFLSMWISNVAA, AQALVLGVALAANIGGMSSPI, FTVKQYYIITVTVATILLWCV, FGSSGQIAIIPIVLFFGTGLL, AFPWSIVILAMGGIALGKAVS, GVFAILCIFGILMLVVGTFVS, ILVFGCALLSSCGMGLASSGF, and ASILAFLCVITLGYGIMASVV.

Belongs to the CitM (TC 2.A.11) transporter family.

It is found in the membrane. Low-affinity phosphate transporter involved in the control of cellular phosphate levels. In Saccharomyces cerevisiae (strain ATCC 204508 / S288c) (Baker's yeast), this protein is Low-affinity phosphate transporter PHO90 (PHO90).